The sequence spans 416 residues: Phosphoglycerate kinase (416 aa).

Ser2 carries the post-translational modification N-acetylserine. Residues Val23, Asp24, Phe25, Asn26, Gln38, Arg39, Ser62, His63, Gly65, and Arg66 each coordinate (2R)-3-phosphoglycerate. A Glycyl lysine isopeptide (Lys-Gly) (interchain with G-Cter in ubiquitin) cross-link involves residue Lys82. At Thr93 the chain carries Phosphothreonine. The residue at position 110 (Ser110) is a Phosphoserine. (2R)-3-phosphoglycerate-binding residues include Leu121 and Arg122. Ser130 and Ser154 each carry phosphoserine. (2R)-3-phosphoglycerate-binding residues include His168 and Arg169. Phosphoserine is present on Ser172. Lys197 is covalently cross-linked (Glycyl lysine isopeptide (Lys-Gly) (interchain with G-Cter in ubiquitin)). At Thr203 the chain carries Phosphothreonine. Gly212 is an ADP binding site. Gly212 contributes to the CDP binding site. Residues Ala213 and Lys214 each coordinate AMP. Ala213 and Lys214 together coordinate ATP. Ala213 provides a ligand contact to Mg(2+). Residues Ala216 and Asp217 each contribute to the Mg(2+) site. Asp217 contacts CDP. Lys218 lines the AMP pocket. Lys218 provides a ligand contact to ATP. ADP is bound at residue Gly236. Residue Gly236 coordinates CDP. Gly237 contacts AMP. Gly237 serves as a coordination point for ATP. Residue Thr241 is modified to Phosphothreonine. Glycyl lysine isopeptide (Lys-Gly) (interchain with G-Cter in ubiquitin) cross-links involve residues Lys258 and Lys274. Thr298 carries the phosphothreonine modification. Residue Lys302 forms a Glycyl lysine isopeptide (Lys-Gly) (interchain with G-Cter in ubiquitin) linkage. An AMP-binding site is contributed by Gly311. 2 residues coordinate ATP: Gly311 and Leu312. Ser318 is modified (phosphoserine). A Phosphothreonine modification is found at Thr331. Asn335 serves as a coordination point for ATP. CDP is bound by residues Gly336 and Phe341. Residue Phe341 participates in ADP binding. Position 342 (Glu342) interacts with AMP. Glu342 serves as a coordination point for ATP. Gly371 is a binding site for (2R)-3-phosphoglycerate. 2 residues coordinate ATP: Asp373 and Thr374. Residue Asp373 coordinates Mg(2+). At Thr392 the chain carries Phosphothreonine. (2R)-3-phosphoglycerate contacts are provided by Gly394 and Gly395.

This sequence belongs to the phosphoglycerate kinase family. In terms of assembly, monomer. Mg(2+) is required as a cofactor.

Its subcellular location is the cytoplasm. The protein localises to the mitochondrion. It catalyses the reaction (2R)-3-phosphoglycerate + ATP = (2R)-3-phospho-glyceroyl phosphate + ADP. Its pathway is carbohydrate degradation; glycolysis; pyruvate from D-glyceraldehyde 3-phosphate: step 2/5. In terms of biological role, catalyzes one of the two ATP producing reactions in the glycolytic pathway via the reversible conversion of 1,3-diphosphoglycerate to 3-phosphoglycerate. Both L- and D- forms of purine and pyrimidine nucleotides can be used as substrates, but the activity is much lower on pyrimidines. Negatively regulates the biosynthesis of acetyl-CoA from pyruvate in the mitochondrion. This chain is Phosphoglycerate kinase (PGK1), found in Saccharomyces cerevisiae (strain ATCC 204508 / S288c) (Baker's yeast).